The primary structure comprises 368 residues: Chorismate synthase (368 aa).

Positions 48 and 54 each coordinate NADP(+). FMN-binding positions include 125-127, 238-239, glycine 278, 293-297, and arginine 319; these read RSS, NA, and KPTSS.

Belongs to the chorismate synthase family. Homotetramer. Requires FMNH2 as cofactor.

The catalysed reaction is 5-O-(1-carboxyvinyl)-3-phosphoshikimate = chorismate + phosphate. It functions in the pathway metabolic intermediate biosynthesis; chorismate biosynthesis; chorismate from D-erythrose 4-phosphate and phosphoenolpyruvate: step 7/7. Its function is as follows. Catalyzes the anti-1,4-elimination of the C-3 phosphate and the C-6 proR hydrogen from 5-enolpyruvylshikimate-3-phosphate (EPSP) to yield chorismate, which is the branch point compound that serves as the starting substrate for the three terminal pathways of aromatic amino acid biosynthesis. This reaction introduces a second double bond into the aromatic ring system. In Methylibium petroleiphilum (strain ATCC BAA-1232 / LMG 22953 / PM1), this protein is Chorismate synthase.